We begin with the raw amino-acid sequence, 249 residues long: MRMVCMSDVNDELDGSPILEEVLGDALGKLKVFHVKLAAEGEPRGLIGPRDVGIIWERHILNSAAIVPFIREATAKRQFKTVADIGSGGGFPGIVAAACLPDHQFTLVEPMERRIEWLHECVDEMGLDNVSIVRSRANAVIEAVRGSNGGRKGRGEDAVDLDGNPIPVRHPFAVVTCRAVAPMTKLSGWTLPLLDKGGRLVALKGRSAQEEIVKATKEISKNGGIHPRVVEAEVGPGLEPTHVLMVDER.

Residues G86, F91, and R178 each contribute to the S-adenosyl-L-methionine site.

This sequence belongs to the methyltransferase superfamily. RNA methyltransferase RsmG family.

The protein localises to the cytoplasm. Its function is as follows. Specifically methylates the N7 position of a guanine in 16S rRNA. This is Ribosomal RNA small subunit methyltransferase G from Bifidobacterium adolescentis (strain ATCC 15703 / DSM 20083 / NCTC 11814 / E194a).